Consider the following 424-residue polypeptide: Glutamyl-tRNA reductase (424 aa).

Substrate contacts are provided by residues 49–52 (TCNR), Ser-107, 112–114 (EPQ), and Gln-118. The active-site Nucleophile is Cys-50. 187–192 (GAGETI) provides a ligand contact to NADP(+).

It belongs to the glutamyl-tRNA reductase family. In terms of assembly, homodimer.

It catalyses the reaction (S)-4-amino-5-oxopentanoate + tRNA(Glu) + NADP(+) = L-glutamyl-tRNA(Glu) + NADPH + H(+). Its pathway is porphyrin-containing compound metabolism; protoporphyrin-IX biosynthesis; 5-aminolevulinate from L-glutamyl-tRNA(Glu): step 1/2. In terms of biological role, catalyzes the NADPH-dependent reduction of glutamyl-tRNA(Glu) to glutamate 1-semialdehyde (GSA). This chain is Glutamyl-tRNA reductase, found in Pseudomonas fluorescens (strain ATCC BAA-477 / NRRL B-23932 / Pf-5).